The sequence spans 152 residues: Nucleoside diphosphate kinase (152 aa).

6 residues coordinate ATP: Lys-11, Phe-59, Arg-87, Thr-93, Arg-104, and Asn-114. Residue His-117 is the Pros-phosphohistidine intermediate of the active site.

This sequence belongs to the NDK family. Homotetramer. Requires Mg(2+) as cofactor.

Its subcellular location is the cytoplasm. It carries out the reaction a 2'-deoxyribonucleoside 5'-diphosphate + ATP = a 2'-deoxyribonucleoside 5'-triphosphate + ADP. The enzyme catalyses a ribonucleoside 5'-diphosphate + ATP = a ribonucleoside 5'-triphosphate + ADP. Its function is as follows. Major role in the synthesis of nucleoside triphosphates other than ATP. The ATP gamma phosphate is transferred to the NDP beta phosphate via a ping-pong mechanism, using a phosphorylated active-site intermediate. This Prochlorococcus marinus subsp. pastoris (strain CCMP1986 / NIES-2087 / MED4) protein is Nucleoside diphosphate kinase.